We begin with the raw amino-acid sequence, 673 residues long: Clotting factor G alpha subunit (673 aa).

The signal sequence occupies residues 1–19 (MLVLLCCVVLHVGVARICC). One can recognise a GH16 domain in the interval 27–257 (LVWSDEFTNG…YVRVYQDAST (231 aa)). Glu-137 functions as the Nucleophile in the catalytic mechanism. Catalysis depends on Glu-142, which acts as the Proton donor. Residue Asn-186 is glycosylated (N-linked (GlcNAc...) asparagine). Positions 266–404 (LDGYYFVQNR…NQLSGQWKLI (139 aa)) constitute a Ricin B-type lectin domain. 2 CBM6 domains span residues 411–533 (KLIQ…IKIT) and 549–671 (KLIQ…IRIT).

This sequence belongs to the glycosyl hydrolase 16 family. Clotting factor G is a heterodimer composed of two non-covalently associated subunits, alpha and beta. In presence of (1-&gt;3)-beta-glucan, proteolytically cleaved into a 55kDa and a 17kDa forms. Expressed in hemocytes (at protein level).

In terms of biological role, component of the heterodimer clotting factor G which may play a role in defense mechanisms against fungi. Initiates a (1-&gt;3)-beta-glucan-sensing clotting pathway whereby the alpha subunit binds to glucans containing (1-&gt;3)-beta linkages, which are components of the fungal cell wall, and the beta subunit catalyzes the activation of proclotting enzyme. The polypeptide is Clotting factor G alpha subunit (Tachypleus tridentatus (Japanese horseshoe crab)).